The primary structure comprises 299 residues: Aspartate carbamoyltransferase catalytic subunit (299 aa).

Carbamoyl phosphate is bound by residues Arg-54 and Thr-55. L-aspartate is bound at residue Lys-83. 3 residues coordinate carbamoyl phosphate: Arg-104, His-132, and Gln-135. Residues Arg-165 and Arg-222 each coordinate L-aspartate. Residues Leu-261 and Pro-262 each coordinate carbamoyl phosphate.

The protein belongs to the aspartate/ornithine carbamoyltransferase superfamily. ATCase family. In terms of assembly, heterooligomer of catalytic and regulatory chains.

The catalysed reaction is carbamoyl phosphate + L-aspartate = N-carbamoyl-L-aspartate + phosphate + H(+). Its pathway is pyrimidine metabolism; UMP biosynthesis via de novo pathway; (S)-dihydroorotate from bicarbonate: step 2/3. Functionally, catalyzes the condensation of carbamoyl phosphate and aspartate to form carbamoyl aspartate and inorganic phosphate, the committed step in the de novo pyrimidine nucleotide biosynthesis pathway. In Archaeoglobus fulgidus (strain ATCC 49558 / DSM 4304 / JCM 9628 / NBRC 100126 / VC-16), this protein is Aspartate carbamoyltransferase catalytic subunit.